The chain runs to 356 residues: Protein pelota homolog (356 aa).

Belongs to the eukaryotic release factor 1 family. Pelota subfamily. In terms of assembly, monomer. A divalent metal cation serves as cofactor.

It localises to the cytoplasm. In terms of biological role, may function in recognizing stalled ribosomes, interact with stem-loop structures in stalled mRNA molecules, and effect endonucleolytic cleavage of the mRNA. May play a role in the release non-functional ribosomes and degradation of damaged mRNAs. Has endoribonuclease activity. This is Protein pelota homolog from Aeropyrum pernix (strain ATCC 700893 / DSM 11879 / JCM 9820 / NBRC 100138 / K1).